A 198-amino-acid polypeptide reads, in one-letter code: FMN-dependent NADH:quinone oxidoreductase 6 (198 aa).

96-99 (MYNF) provides a ligand contact to FMN.

The protein belongs to the azoreductase type 1 family. As to quaternary structure, homodimer. FMN is required as a cofactor.

It carries out the reaction 2 a quinone + NADH + H(+) = 2 a 1,4-benzosemiquinone + NAD(+). It catalyses the reaction N,N-dimethyl-1,4-phenylenediamine + anthranilate + 2 NAD(+) = 2-(4-dimethylaminophenyl)diazenylbenzoate + 2 NADH + 2 H(+). In terms of biological role, quinone reductase that provides resistance to thiol-specific stress caused by electrophilic quinones. Functionally, also exhibits azoreductase activity. Catalyzes the reductive cleavage of the azo bond in aromatic azo compounds to the corresponding amines. The protein is FMN-dependent NADH:quinone oxidoreductase 6 of Burkholderia lata (strain ATCC 17760 / DSM 23089 / LMG 22485 / NCIMB 9086 / R18194 / 383).